The primary structure comprises 266 residues: Protein SCO2 homolog, mitochondrial (266 aa).

The transit peptide at 1-41 (MLLLARPPKAWHRLFQLQPLALLGTPGGKTQHVRYQLFSTP) directs the protein to the mitochondrion. Topologically, residues 42-60 (GPADTGRQGQPQGPGLRTR) are mitochondrial matrix. A helical transmembrane segment spans residues 61-78 (LLVTALVGAGLGGAWLAL). Over 79 to 266 (RAEKERGRQQ…HMAAFRSVLR (188 aa)) the chain is Mitochondrial intermembrane. One can recognise a Thioredoxin domain in the interval 85–259 (GRQQQRTEAL…ITDSVRRHMA (175 aa)). Positions 133, 137, and 224 each coordinate Cu cation. An intrachain disulfide couples cysteine 133 to cysteine 137.

This sequence belongs to the SCO1/2 family. Homodimer. Interacts with COA6. Found in a complex with TMEM177, COX20, COA6, MT-CO2/COX2, COX18 and SCO1. Interacts with TMEM177 in a COX20-dependent manner. Interacts with COX20 in a MT-CO2/COX2- and COX18-dependent manner. Interacts with COX16.

It localises to the mitochondrion inner membrane. Its function is as follows. Copper metallochaperone essential for the synthesis and maturation of cytochrome c oxidase subunit II (MT-CO2/COX2) by facilitating the incorporation of copper into the Cu(A) site of MT-CO2/COX2. Could also act as a thiol-disulfide oxidoreductase to regulate the redox state of the cysteines in SCO1 during maturation of MT-CO2/COX2. The sequence is that of Protein SCO2 homolog, mitochondrial (SCO2) from Bos taurus (Bovine).